The following is a 124-amino-acid chain: MMAAASPTRAGQAAETQALEYLQGQGLQLLARNWRCKGGELDLVMLDADTVVFVEVRYRLHAGFGGALDSIDGRKQKRLVLAATLFLQKEAHWGNYPCRFDVVALQGSHHAGRPLQWLKNAFEC.

It belongs to the UPF0102 family.

The protein is UPF0102 protein PP_1324 of Pseudomonas putida (strain ATCC 47054 / DSM 6125 / CFBP 8728 / NCIMB 11950 / KT2440).